The chain runs to 80 residues: uncharacterized protein (80 aa).

4Fe-4S ferredoxin-type domains lie at Lys21–Asn49 and Asn50–Ala80. [4Fe-4S] cluster-binding residues include Cys30, Cys33, Cys36, Cys40, Cys60, Cys63, Cys66, and Cys70.

It depends on [4Fe-4S] cluster as a cofactor.

This is an uncharacterized protein from Methanocaldococcus jannaschii (strain ATCC 43067 / DSM 2661 / JAL-1 / JCM 10045 / NBRC 100440) (Methanococcus jannaschii).